Here is an 88-residue protein sequence, read N- to C-terminus: Small ribosomal subunit protein uS17 (88 aa).

The protein belongs to the universal ribosomal protein uS17 family. As to quaternary structure, part of the 30S ribosomal subunit.

One of the primary rRNA binding proteins, it binds specifically to the 5'-end of 16S ribosomal RNA. This Oleidesulfovibrio alaskensis (strain ATCC BAA-1058 / DSM 17464 / G20) (Desulfovibrio alaskensis) protein is Small ribosomal subunit protein uS17.